The primary structure comprises 158 residues: NAD(P)H-quinone oxidoreductase subunit J, chloroplastic (158 aa).

It belongs to the complex I 30 kDa subunit family. In terms of assembly, NDH is composed of at least 16 different subunits, 5 of which are encoded in the nucleus.

Its subcellular location is the plastid. The protein localises to the chloroplast thylakoid membrane. The enzyme catalyses a plastoquinone + NADH + (n+1) H(+)(in) = a plastoquinol + NAD(+) + n H(+)(out). It carries out the reaction a plastoquinone + NADPH + (n+1) H(+)(in) = a plastoquinol + NADP(+) + n H(+)(out). In terms of biological role, NDH shuttles electrons from NAD(P)H:plastoquinone, via FMN and iron-sulfur (Fe-S) centers, to quinones in the photosynthetic chain and possibly in a chloroplast respiratory chain. The immediate electron acceptor for the enzyme in this species is believed to be plastoquinone. Couples the redox reaction to proton translocation, and thus conserves the redox energy in a proton gradient. The polypeptide is NAD(P)H-quinone oxidoreductase subunit J, chloroplastic (Coffea arabica (Arabian coffee)).